Reading from the N-terminus, the 448-residue chain is MGRSYYVDDGVEKYFSKLIQQQKAYVTGLLIGQYSSQRDYAVLAAQTPQKEDQSEETKSGFSKLEGIDDEWVSMHASQLGRMLPGGLMVLGVFLMTSPDLSKDAQNVLRKLVFTVEKSSMKNRLWNFDDDDVSERVTLHICSATKKITCRTYDINDPKSTPKPADWKYQSSGLSWLTIDCSVRVDVTIPLTSSSLTYQERQKSIRLGLVKWAKEIEDSLVLFNGQVKDKSADLFEEQKKSSRSSSHYSPQIITANVLTAAPLIDSTRSTALVQPCKSSLTIQGVVKCCGYIHSNRPKVKDALQAVKRDILNTIQARCEMLFEDMMLNGPSKGTENEVCPLPQRVFVPIKGSSLKLCDYLFGDETSSDLQSHFLEIMDQEVEQNELEFPEKKCSCTQPEERESEPVSYNLESKPVDQANSSSKFLLNKGLLISTVVASIAVIISFYYII.

2 helical membrane passes run Ala-76–Thr-96 and Gly-428–Ile-448.

This sequence belongs to the ODR-4 family.

The protein localises to the membrane. Functionally, may play a role in the trafficking of a subset of G-protein coupled receptors. The sequence is that of Protein odr-4 homolog (odr4) from Xenopus tropicalis (Western clawed frog).